Here is a 262-residue protein sequence, read N- to C-terminus: Ribosomal RNA small subunit methyltransferase A (262 aa).

Residues asparagine 20, leucine 22, glycine 47, glutamate 68, aspartate 90, and asparagine 110 each contribute to the S-adenosyl-L-methionine site.

This sequence belongs to the class I-like SAM-binding methyltransferase superfamily. rRNA adenine N(6)-methyltransferase family. RsmA subfamily.

The protein localises to the cytoplasm. It carries out the reaction adenosine(1518)/adenosine(1519) in 16S rRNA + 4 S-adenosyl-L-methionine = N(6)-dimethyladenosine(1518)/N(6)-dimethyladenosine(1519) in 16S rRNA + 4 S-adenosyl-L-homocysteine + 4 H(+). Specifically dimethylates two adjacent adenosines (A1518 and A1519) in the loop of a conserved hairpin near the 3'-end of 16S rRNA in the 30S particle. May play a critical role in biogenesis of 30S subunits. The chain is Ribosomal RNA small subunit methyltransferase A from Chlorobium phaeobacteroides (strain BS1).